The sequence spans 559 residues: Polypeptide N-acetylgalactosaminyltransferase 1 (559 aa).

Residues 1-8 (MRKFAYCK) lie on the Cytoplasmic side of the membrane. The helical; Signal-anchor for type II membrane protein transmembrane segment at 9–28 (VVLATSLIWVLLDMFLLLYF) threads the bilayer. The Lumenal segment spans residues 29-559 (SECNKCDEKK…LRNVTLPEIF (531 aa)). The interval 45-65 (GDVLEPVQKPHEGPGEMGKPV) is disordered. A glycan (N-linked (GlcNAc...) asparagine) is linked at Asn-95. Intrachain disulfides connect Cys-106-Cys-339, Cys-330-Cys-408, Cys-442-Cys-459, Cys-482-Cys-497, and Cys-523-Cys-540. Positions 115–225 (LPTTSVVIVF…VGWLEPLLAR (111 aa)) are catalytic subdomain A. Substrate contacts are provided by Asp-156 and Arg-186. Mn(2+)-binding residues include Asp-209 and His-211. Positions 285-347 (PVRTPTMAGG…TCSHVGHVFR (63 aa)) are catalytic subdomain B. Residue Trp-316 participates in substrate binding. Mn(2+) is bound at residue His-344. The substrate site is built by Arg-347 and Tyr-352. The Ricin B-type lectin domain occupies 429-551 (FSLGEIRNVE…GSRSQQWLLR (123 aa)). N-linked (GlcNAc...) asparagine glycosylation occurs at Asn-552.

Belongs to the glycosyltransferase 2 family. GalNAc-T subfamily. The cofactor is Mn(2+). Widely expressed. Expressed in all tissues tested.

Its subcellular location is the golgi apparatus. The protein resides in the golgi stack membrane. It is found in the secreted. The catalysed reaction is L-seryl-[protein] + UDP-N-acetyl-alpha-D-galactosamine = a 3-O-[N-acetyl-alpha-D-galactosaminyl]-L-seryl-[protein] + UDP + H(+). The enzyme catalyses L-threonyl-[protein] + UDP-N-acetyl-alpha-D-galactosamine = a 3-O-[N-acetyl-alpha-D-galactosaminyl]-L-threonyl-[protein] + UDP + H(+). It participates in protein modification; protein glycosylation. Catalyzes the initial reaction in O-linked oligosaccharide biosynthesis, the transfer of an N-acetyl-D-galactosamine residue to a serine or threonine residue on the protein receptor. Has a broad spectrum of substrates such as apomucin-, MUC5AC-, MUC1- and MUC2-derived peptides. The protein is Polypeptide N-acetylgalactosaminyltransferase 1 of Homo sapiens (Human).